The chain runs to 125 residues: UPF0102 protein mlr4633 (125 aa).

Belongs to the UPF0102 family.

The polypeptide is UPF0102 protein mlr4633 (Mesorhizobium japonicum (strain LMG 29417 / CECT 9101 / MAFF 303099) (Mesorhizobium loti (strain MAFF 303099))).